Reading from the N-terminus, the 141-residue chain is Large ribosomal subunit protein uL11 (141 aa).

Belongs to the universal ribosomal protein uL11 family. Part of the ribosomal stalk of the 50S ribosomal subunit. Interacts with L10 and the large rRNA to form the base of the stalk. L10 forms an elongated spine to which L12 dimers bind in a sequential fashion forming a multimeric L10(L12)X complex. Post-translationally, one or more lysine residues are methylated.

In terms of biological role, forms part of the ribosomal stalk which helps the ribosome interact with GTP-bound translation factors. The sequence is that of Large ribosomal subunit protein uL11 from Thermotoga petrophila (strain ATCC BAA-488 / DSM 13995 / JCM 10881 / RKU-1).